We begin with the raw amino-acid sequence, 478 residues long: tRNA (adenine(58)-N(1))-methyltransferase non-catalytic subunit TRM6 (478 aa).

Residues 456–478 (SENATAADSSEKLAEHGAKKQKI) form a disordered region. Over residues 464–478 (SSEKLAEHGAKKQKI) the composition is skewed to basic and acidic residues.

Belongs to the TRM6/GCD10 family. In terms of assembly, heterotetramer; composed of two copies of TRM6/GCD10 and two copies of TRM61/GCD14.

It is found in the nucleus. In terms of biological role, substrate-binding subunit of tRNA (adenine-N(1)-)-methyltransferase, which catalyzes the formation of N(1)-methyladenine at position 58 (m1A58) in initiator methionyl-tRNA. Also required for repression of GCN4 mRNA translation by the upstream open reading frames (uORFs) under conditions of amino acid sufficiency. This Saccharomyces cerevisiae (strain ATCC 204508 / S288c) (Baker's yeast) protein is tRNA (adenine(58)-N(1))-methyltransferase non-catalytic subunit TRM6 (GCD10).